The following is a 115-amino-acid chain: U3-lycotoxin-Ls1a (115 aa).

An N-terminal signal peptide occupies residues methionine 1–alanine 20. Residues glutamate 21–arginine 44 constitute a propeptide that is removed on maturation. 4 disulfides stabilise this stretch: cysteine 48-cysteine 63, cysteine 55-cysteine 72, cysteine 62-cysteine 87, and cysteine 74-cysteine 85.

This sequence belongs to the neurotoxin 19 (CSTX) family. 01 subfamily. In terms of tissue distribution, expressed by the venom gland.

It localises to the secreted. The protein is U3-lycotoxin-Ls1a of Lycosa singoriensis (Wolf spider).